Here is a 402-residue protein sequence, read N- to C-terminus: Acetate kinase (402 aa).

Residue Asn7 participates in Mg(2+) binding. An ATP-binding site is contributed by Lys14. A substrate-binding site is contributed by Arg95. Asp152 serves as the catalytic Proton donor/acceptor. Residues 212–216 (HLGNG), 286–288 (DMR), and 334–338 (GIGEN) contribute to the ATP site. Mg(2+) is bound at residue Glu388.

It belongs to the acetokinase family. Homodimer. Mg(2+) is required as a cofactor. Requires Mn(2+) as cofactor.

Its subcellular location is the cytoplasm. It carries out the reaction acetate + ATP = acetyl phosphate + ADP. Its pathway is metabolic intermediate biosynthesis; acetyl-CoA biosynthesis; acetyl-CoA from acetate: step 1/2. Its function is as follows. Catalyzes the formation of acetyl phosphate from acetate and ATP. Can also catalyze the reverse reaction. In Oleidesulfovibrio alaskensis (strain ATCC BAA-1058 / DSM 17464 / G20) (Desulfovibrio alaskensis), this protein is Acetate kinase.